Reading from the N-terminus, the 1140-residue chain is Squamosa promoter-binding-like protein 15 (1140 aa).

Disordered regions lie at residues 73–112 (RVNA…LNLQ) and 124–177 (DVSP…GGNS). Composition is skewed to low complexity over residues 76-100 (AGLS…EALR) and 125-135 (VSPAATTVSSS). Over residues 164 to 177 (ASGGGGGGGGGGNS) the composition is skewed to gly residues. The SBP-type zinc-finger motif lies at 184-261 (YPMCQVDDCR…AGHNRRRRKT (78 aa)). Zn(2+) contacts are provided by C187, C192, C209, H212, C228, C231, H235, and C247. A Bipartite nuclear localization signal motif is present at residues 244–260 (KRSCRRRLAGHNRRRRK). Disordered regions lie at residues 327 to 382 (NNGN…ADGF), 403 to 472 (TSNP…TPPY), 496 to 517 (LSSE…PVTH), and 558 to 597 (KDSE…DGQD). The span at 345–375 (ASHSQQQDSVQRTTNGFEKQTNGLDKQTNGF) shows a compositional bias: polar residues. Positions 403 to 430 (TSNPDSNTSQSQGSSDSSGNNKSKSQST) are enriched in low complexity. The segment covering 450–466 (RKNDALERSPEMYKQPD) has biased composition (basic and acidic residues). The segment covering 496-514 (LSSESSNPLDERSPSSSPP) has biased composition (polar residues). The span at 579–593 (TSTSCSDHSPSTSNS) shows a compositional bias: low complexity.

Expressed in stems, leaf sheaths, and young panicles.

Its subcellular location is the nucleus. Its function is as follows. Trans-acting factor that binds specifically to the consensus nucleotide sequence 5'-TNCGTACAA-3'. The sequence is that of Squamosa promoter-binding-like protein 15 (SPL15) from Oryza sativa subsp. indica (Rice).